The primary structure comprises 309 residues: MTQINCTQVTEFILVGLTDRQELKMPLFVLFLSIYLFTVVGNLGLILLIRTDEKLNTPMYFFLSNLAFVDFCYSSVITPKMLGNFLYKQNSISFNACAAQLGCFLAFMTAECLLLASMAYDRYVAICNPLMYMVVMSPGICIQLVAAPHSYSILVALFHTILTFRLSYCHSNIVNHFYCDDMPLLRLTCSDTRFKQLWIFACAGIMFISSLLIVFVSYMFIISAILRMHSAEGRQKAFSTCGSHMLAVTIFYGTLIFMYLQPSSSHALDTDKMASVFYTVIIPMLNPLIYSLQNKEVKEALKKIIINKN.

At 1-28 (MTQINCTQVTEFILVGLTDRQELKMPLF) the chain is on the extracellular side. Asparagine 5 carries an N-linked (GlcNAc...) asparagine glycan. The chain crosses the membrane as a helical span at residues 29–49 (VLFLSIYLFTVVGNLGLILLI). The Cytoplasmic segment spans residues 50–56 (RTDEKLN). Residues 57-77 (TPMYFFLSNLAFVDFCYSSVI) form a helical membrane-spanning segment. The Extracellular portion of the chain corresponds to 78-97 (TPKMLGNFLYKQNSISFNAC). Residues cysteine 97 and cysteine 179 are joined by a disulfide bond. Residues 98–118 (AAQLGCFLAFMTAECLLLASM) form a helical membrane-spanning segment. Residues 119 to 143 (AYDRYVAICNPLMYMVVMSPGICIQ) lie on the Cytoplasmic side of the membrane. The helical transmembrane segment at 144–164 (LVAAPHSYSILVALFHTILTF) threads the bilayer. At 165–204 (RLSYCHSNIVNHFYCDDMPLLRLTCSDTRFKQLWIFACAG) the chain is on the extracellular side. Residues 205-225 (IMFISSLLIVFVSYMFIISAI) form a helical membrane-spanning segment. Residues 226-239 (LRMHSAEGRQKAFS) lie on the Cytoplasmic side of the membrane. Residues 240–260 (TCGSHMLAVTIFYGTLIFMYL) form a helical membrane-spanning segment. Residues 261-272 (QPSSSHALDTDK) lie on the Extracellular side of the membrane. Residues 273–293 (MASVFYTVIIPMLNPLIYSLQ) form a helical membrane-spanning segment. Residues 294 to 309 (NKEVKEALKKIIINKN) lie on the Cytoplasmic side of the membrane.

The protein belongs to the G-protein coupled receptor 1 family.

It is found in the cell membrane. In terms of biological role, odorant receptor. This is Olfactory receptor 8U9 (OR8U9) from Homo sapiens (Human).